We begin with the raw amino-acid sequence, 339 residues long: Small ribosomal subunit biogenesis GTPase RsgA (339 aa).

The CP-type G domain maps to 111 to 271 (MRGLLKPVAA…LIDSPGIREF (161 aa)). GTP contacts are provided by residues 159 to 162 (NKAD) and 213 to 221 (GQSGVGKSS). Residues cysteine 295, cysteine 300, histidine 302, and cysteine 308 each coordinate Zn(2+).

Belongs to the TRAFAC class YlqF/YawG GTPase family. RsgA subfamily. Monomer. Associates with 30S ribosomal subunit, binds 16S rRNA. Zn(2+) serves as cofactor.

It localises to the cytoplasm. Its function is as follows. One of several proteins that assist in the late maturation steps of the functional core of the 30S ribosomal subunit. Helps release RbfA from mature subunits. May play a role in the assembly of ribosomal proteins into the subunit. Circularly permuted GTPase that catalyzes slow GTP hydrolysis, GTPase activity is stimulated by the 30S ribosomal subunit. In Pseudomonas aeruginosa (strain UCBPP-PA14), this protein is Small ribosomal subunit biogenesis GTPase RsgA.